Consider the following 261-residue polypeptide: Cell division protein B (261 aa).

The segment at 213-261 (SEDMILNYIKTTGGFIDVDYIAKNFDVSKDEVFNVLRRLEEKGLIVLEG) is winged-helix-like fold.

Interacts with CdvA. Interacts with CdvC.

It localises to the cytoplasm. It is found in the nucleoid. Its function is as follows. Part of a cell division machinery. The CdvA, CdvB and CdvC proteins polymerize between segregating nucleoids and persist throughout cell division, forming a successively smaller structure during constriction. In Sulfolobus acidocaldarius (strain ATCC 33909 / DSM 639 / JCM 8929 / NBRC 15157 / NCIMB 11770), this protein is Cell division protein B.